The sequence spans 456 residues: Exodeoxyribonuclease 7 large subunit (456 aa).

Belongs to the XseA family. In terms of assembly, heterooligomer composed of large and small subunits.

The protein resides in the cytoplasm. It catalyses the reaction Exonucleolytic cleavage in either 5'- to 3'- or 3'- to 5'-direction to yield nucleoside 5'-phosphates.. In terms of biological role, bidirectionally degrades single-stranded DNA into large acid-insoluble oligonucleotides, which are then degraded further into small acid-soluble oligonucleotides. The sequence is that of Exodeoxyribonuclease 7 large subunit from Shigella boydii serotype 18 (strain CDC 3083-94 / BS512).